A 125-amino-acid polypeptide reads, in one-letter code: Small ribosomal subunit protein uS12 (125 aa).

A disordered region spans residues 1 to 28 (MPTISQLIGSERKRLTRKTKSPALKSCP). Asp-89 is modified (3-methylthioaspartic acid). Residues 104–125 (TAGVKDRRQSRSKYGAKAPKND) are disordered.

The protein belongs to the universal ribosomal protein uS12 family. In terms of assembly, part of the 30S ribosomal subunit. Contacts proteins S8 and S17. May interact with IF1 in the 30S initiation complex.

Its function is as follows. With S4 and S5 plays an important role in translational accuracy. Functionally, interacts with and stabilizes bases of the 16S rRNA that are involved in tRNA selection in the A site and with the mRNA backbone. Located at the interface of the 30S and 50S subunits, it traverses the body of the 30S subunit contacting proteins on the other side and probably holding the rRNA structure together. The combined cluster of proteins S8, S12 and S17 appears to hold together the shoulder and platform of the 30S subunit. The protein is Small ribosomal subunit protein uS12 of Prochlorococcus marinus subsp. pastoris (strain CCMP1986 / NIES-2087 / MED4).